A 132-amino-acid chain; its full sequence is Small ribosomal subunit protein uS8 (132 aa).

The protein belongs to the universal ribosomal protein uS8 family. In terms of assembly, part of the 30S ribosomal subunit. Contacts proteins S5 and S12.

One of the primary rRNA binding proteins, it binds directly to 16S rRNA central domain where it helps coordinate assembly of the platform of the 30S subunit. This is Small ribosomal subunit protein uS8 from Geobacillus thermodenitrificans (strain NG80-2).